The following is a 222-amino-acid chain: MSDFNKDEYLNDLPDMDDLSGQAAPAAASADSAAAAAGATQEGAAQPAAAQSQENGDSAAADGADKAGAADGKADDTLTPLGQAKKEAAEYLEALQRERAEFINFRNRAQKEQERFRQHGIIDVLTALLPALDDIDRIREHSEMDDSFKAVANKIDKAFEKFGVEKFGEKGEDFDPTKHDAILHKPDPNAEKETVDTVVEAGYRIGDRVIRAARVVVASPQN.

A disordered region spans residues 1–82 (MSDFNKDEYL…KADDTLTPLG (82 aa)). The segment covering 20–71 (SGQAAPAAASADSAAAAAGATQEGAAQPAAAQSQENGDSAAADGADKAGAAD) has biased composition (low complexity).

It belongs to the GrpE family. Homodimer.

It localises to the cytoplasm. Functionally, participates actively in the response to hyperosmotic and heat shock by preventing the aggregation of stress-denatured proteins, in association with DnaK and GrpE. It is the nucleotide exchange factor for DnaK and may function as a thermosensor. Unfolded proteins bind initially to DnaJ; upon interaction with the DnaJ-bound protein, DnaK hydrolyzes its bound ATP, resulting in the formation of a stable complex. GrpE releases ADP from DnaK; ATP binding to DnaK triggers the release of the substrate protein, thus completing the reaction cycle. Several rounds of ATP-dependent interactions between DnaJ, DnaK and GrpE are required for fully efficient folding. The chain is Protein GrpE from Bifidobacterium adolescentis (strain ATCC 15703 / DSM 20083 / NCTC 11814 / E194a).